We begin with the raw amino-acid sequence, 130 residues long: NADH-quinone oxidoreductase subunit A (130 aa).

3 helical membrane passes run 15–35 (AIHV…ATII), 67–87 (FLIA…FAWA), and 95–115 (WVGL…LIYL).

The protein belongs to the complex I subunit 3 family. In terms of assembly, NDH-1 is composed of 14 different subunits. Subunits NuoA, H, J, K, L, M, N constitute the membrane sector of the complex.

It localises to the cell inner membrane. It carries out the reaction a quinone + NADH + 5 H(+)(in) = a quinol + NAD(+) + 4 H(+)(out). Its function is as follows. NDH-1 shuttles electrons from NADH, via FMN and iron-sulfur (Fe-S) centers, to quinones in the respiratory chain. The immediate electron acceptor for the enzyme in this species is believed to be ubiquinone. Couples the redox reaction to proton translocation (for every two electrons transferred, four hydrogen ions are translocated across the cytoplasmic membrane), and thus conserves the redox energy in a proton gradient. The sequence is that of NADH-quinone oxidoreductase subunit A from Rhodopseudomonas palustris (strain BisA53).